The primary structure comprises 368 residues: tRNA-specific 2-thiouridylase MnmA (368 aa).

ATP contacts are provided by residues 23-30 (ALSGGVDS) and Leu-49. The Nucleophile role is filled by Cys-110. Cys-110 and Cys-209 are disulfide-bonded. An ATP-binding site is contributed by Gly-135. The interval 159–161 (KDQ) is interaction with tRNA. Cys-209 functions as the Cysteine persulfide intermediate in the catalytic mechanism. Residues 314–315 (RY) are interaction with tRNA.

It belongs to the MnmA/TRMU family.

It localises to the cytoplasm. The catalysed reaction is S-sulfanyl-L-cysteinyl-[protein] + uridine(34) in tRNA + AH2 + ATP = 2-thiouridine(34) in tRNA + L-cysteinyl-[protein] + A + AMP + diphosphate + H(+). Its function is as follows. Catalyzes the 2-thiolation of uridine at the wobble position (U34) of tRNA, leading to the formation of s(2)U34. The polypeptide is tRNA-specific 2-thiouridylase MnmA (Synechococcus sp. (strain JA-2-3B'a(2-13)) (Cyanobacteria bacterium Yellowstone B-Prime)).